We begin with the raw amino-acid sequence, 235 residues long: Dephospho-CoA kinase (235 aa).

Residues 15–219 (NVGLTGSISC…KKERLQRKSA (205 aa)) enclose the DPCK domain. 23–28 (SCGKST) is a binding site for ATP.

The protein belongs to the CoaE family.

It is found in the cytoplasm. The enzyme catalyses 3'-dephospho-CoA + ATP = ADP + CoA + H(+). It participates in cofactor biosynthesis; coenzyme A biosynthesis; CoA from (R)-pantothenate: step 5/5. Its function is as follows. Catalyzes the phosphorylation of the 3'-hydroxyl group of dephosphocoenzyme A to form coenzyme A. This is Dephospho-CoA kinase from Syntrophus aciditrophicus (strain SB).